The primary structure comprises 367 residues: Protein NDRG4-B (367 aa).

A compositionally biased stretch (basic and acidic residues) spans 1–12 (MSELRFPEEKPL). Disordered stretches follow at residues 1–21 (MSEL…TEME) and 333–367 (LTSA…EVSC). A compositionally biased stretch (polar residues) spans 347–367 (CTQSESSDGIGQINHTMEVSC).

Belongs to the NDRG family.

Its subcellular location is the cytoplasm. The protein localises to the cytosol. Functionally, contributes to the maintenance of intracerebral BDNF levels within the normal range. May enhance growth factor-induced ERK1 and ERK2 phosphorylation. May attenuate growth factor-promoted ELK1 phosphorylation in a microtubule-dependent manner. This chain is Protein NDRG4-B (ndrg4-b), found in Xenopus laevis (African clawed frog).